Here is an 865-residue protein sequence, read N- to C-terminus: Protein translocase subunit SecA (865 aa).

ATP-binding positions include Gln93, 111–115 (GEGKT), and Asp501. Cys841, Cys843, Cys852, and Cys853 together coordinate Zn(2+).

Belongs to the SecA family. In terms of assembly, monomer and homodimer. Part of the essential Sec protein translocation apparatus which comprises SecA, SecYEG and auxiliary proteins SecDF-YajC and YidC. The cofactor is Zn(2+).

Its subcellular location is the cell inner membrane. The protein localises to the cytoplasm. The catalysed reaction is ATP + H2O + cellular proteinSide 1 = ADP + phosphate + cellular proteinSide 2.. Functionally, part of the Sec protein translocase complex. Interacts with the SecYEG preprotein conducting channel. Has a central role in coupling the hydrolysis of ATP to the transfer of proteins into and across the cell membrane, serving as an ATP-driven molecular motor driving the stepwise translocation of polypeptide chains across the membrane. The polypeptide is Protein translocase subunit SecA (Helicobacter pylori (strain ATCC 700392 / 26695) (Campylobacter pylori)).